Here is a 226-residue protein sequence, read N- to C-terminus: 2-amino-5-formylamino-6-ribosylaminopyrimidin-4(3H)-one 5'-monophosphate deformylase (226 aa).

Fe cation is bound by residues Glu29, His31, Asp40, and His108.

This sequence belongs to the creatininase superfamily. FAPy deformylase family. In terms of assembly, homodimer. Fe(2+) serves as cofactor. Zn(2+) is required as a cofactor.

The enzyme catalyses 2-amino-5-formylamino-6-(5-phospho-D-ribosylamino)pyrimidin-4(3H)-one + H2O = 2,5-diamino-6-(1-D-ribosylamino)pyrimidin-4(3H)-one 5'-phosphate + formate + H(+). Its pathway is cofactor biosynthesis; coenzyme F420 biosynthesis. The protein operates within cofactor biosynthesis; riboflavin biosynthesis. Catalyzes the hydrolysis of the formamide of 2-amino-5-formylamino-6-ribosylamino-4(3H)-pyrimidinone 5'-monophosphate (FAPy) to form 2,5-diamino-6-ribosylamino-4(3H)-pyrimidinone 5'-phosphate (APy). The sequence is that of 2-amino-5-formylamino-6-ribosylaminopyrimidin-4(3H)-one 5'-monophosphate deformylase from Methanocaldococcus vulcanius (strain ATCC 700851 / DSM 12094 / M7) (Methanococcus vulcanius).